Consider the following 272-residue polypeptide: 4-hydroxy-tetrahydrodipicolinate reductase (272 aa).

Residues 11 to 16 (GVSGRM) and Glu-37 contribute to the NAD(+) site. Position 38 (Arg-38) interacts with NADP(+). NAD(+) is bound by residues 101-103 (GTT) and 125-128 (AGNM). His-158 functions as the Proton donor/acceptor in the catalytic mechanism. His-159 provides a ligand contact to (S)-2,3,4,5-tetrahydrodipicolinate. The active-site Proton donor is Lys-162. 168–169 (GT) provides a ligand contact to (S)-2,3,4,5-tetrahydrodipicolinate.

This sequence belongs to the DapB family.

The protein localises to the cytoplasm. The enzyme catalyses (S)-2,3,4,5-tetrahydrodipicolinate + NAD(+) + H2O = (2S,4S)-4-hydroxy-2,3,4,5-tetrahydrodipicolinate + NADH + H(+). It catalyses the reaction (S)-2,3,4,5-tetrahydrodipicolinate + NADP(+) + H2O = (2S,4S)-4-hydroxy-2,3,4,5-tetrahydrodipicolinate + NADPH + H(+). Its pathway is amino-acid biosynthesis; L-lysine biosynthesis via DAP pathway; (S)-tetrahydrodipicolinate from L-aspartate: step 4/4. Functionally, catalyzes the conversion of 4-hydroxy-tetrahydrodipicolinate (HTPA) to tetrahydrodipicolinate. The polypeptide is 4-hydroxy-tetrahydrodipicolinate reductase (Roseobacter denitrificans (strain ATCC 33942 / OCh 114) (Erythrobacter sp. (strain OCh 114))).